Consider the following 465-residue polypeptide: 2-halobenzoate 1,2-dioxygenase large subunit (465 aa).

Positions 56 to 154 (WVFLAHESQV…GFNVDGSHDL (99 aa)) constitute a Rieske domain. Positions 98, 100, 118, and 121 each coordinate [2Fe-2S] cluster. Residues histidine 227 and histidine 232 each contribute to the Fe cation site.

This sequence belongs to the bacterial ring-hydroxylating dioxygenase alpha subunit family. As to quaternary structure, heterohexamer of 3 large (CbdA) subunits and 3 small (CbdB) subunits. The heterohexamer is part of 2-halobenzoate dioxygenase two component enzyme system. The other component is a NADH:acceptor reductase (CdbC). It depends on [2Fe-2S] cluster as a cofactor. Fe(2+) is required as a cofactor.

The catalysed reaction is a 2-halobenzoate + NADH + O2 + H(+) = a halide anion + catechol + CO2 + NAD(+). It participates in xenobiotic degradation; benzoate degradation via CoA ligation. Component of 2-halobenzoate dioxygenase multicomponent enzyme system which catalyzes the incorporation of both atoms of molecular oxygen into 2-halobenzoate to form catechol. In Burkholderia cepacia (Pseudomonas cepacia), this protein is 2-halobenzoate 1,2-dioxygenase large subunit (cbdA).